The sequence spans 199 residues: Regulator of G-protein signaling 16 (199 aa).

S-palmitoyl cysteine attachment occurs at residues C2 and C12. An RGS domain is found at S64–A180. A phosphotyrosine mark is found at Y167 and Y176.

Interacts with GNAI1 and GNAQ. Interacts with GNAI3, GNAI3 and GNAO1. Post-translationally, palmitoylated on Cys-2 and/or Cys-12. In terms of processing, phosphorylated. Phosphorylation at Tyr-167 by EGFR enhances GTPase accelerating (GAP) activity toward GNAI1. In terms of tissue distribution, predominantly found in the retina. Some expression has been found in the liver.

The protein localises to the membrane. Its function is as follows. Regulates G protein-coupled receptor signaling cascades. Inhibits signal transduction by increasing the GTPase activity of G protein alpha subunits, thereby driving them into their inactive GDP-bound form. Plays an important role in the phototransduction cascade by regulating the lifetime and effective concentration of activated transducin alpha. May regulate extra and intracellular mitogenic signals. This chain is Regulator of G-protein signaling 16 (Rgs16), found in Rattus norvegicus (Rat).